Consider the following 155-residue polypeptide: Small ribosomal subunit protein uS9 (155 aa).

This sequence belongs to the universal ribosomal protein uS9 family.

This Sinorhizobium medicae (strain WSM419) (Ensifer medicae) protein is Small ribosomal subunit protein uS9.